A 175-amino-acid polypeptide reads, in one-letter code: Adenine phosphoribosyltransferase (175 aa).

It belongs to the purine/pyrimidine phosphoribosyltransferase family. As to quaternary structure, homodimer.

The protein localises to the cytoplasm. It carries out the reaction AMP + diphosphate = 5-phospho-alpha-D-ribose 1-diphosphate + adenine. It functions in the pathway purine metabolism; AMP biosynthesis via salvage pathway; AMP from adenine: step 1/1. Functionally, catalyzes a salvage reaction resulting in the formation of AMP, that is energically less costly than de novo synthesis. This is Adenine phosphoribosyltransferase from Francisella tularensis subsp. tularensis (strain FSC 198).